Consider the following 343-residue polypeptide: Transcription factor MYB11 (343 aa).

HTH myb-type domains follow at residues 9–61 (KVGI…INYL) and 62–116 (RSDI…SRKL). DNA-binding regions (H-T-H motif) lie at residues 37 to 61 (WRSL…INYL) and 89 to 112 (WSTI…NSHL). The interval 126–146 (ANTVENAPPPPKRRPGRTSRS) is disordered.

Expressed in seedlings, roots, cotyledons, leaves and apical meristems.

The protein resides in the nucleus. In terms of biological role, modulates overall growth by reducing the proliferation activity of meristematic cells and delaying development. Flavonol-specific transcription activator involved in the regulation of several genes of flavonoid biosynthesis. Activates the expression of CHS, CHI, F3H and FLS1. Confers tolerance to UV-B. The chain is Transcription factor MYB11 from Arabidopsis thaliana (Mouse-ear cress).